The following is a 434-amino-acid chain: ATP-dependent protease ATPase subunit HslU (434 aa).

ATP is bound by residues valine 18, 60-65 (GVGKTE), aspartate 247, glutamate 312, and arginine 384.

It belongs to the ClpX chaperone family. HslU subfamily. As to quaternary structure, a double ring-shaped homohexamer of HslV is capped on each side by a ring-shaped HslU homohexamer. The assembly of the HslU/HslV complex is dependent on binding of ATP.

The protein localises to the cytoplasm. Functionally, ATPase subunit of a proteasome-like degradation complex; this subunit has chaperone activity. The binding of ATP and its subsequent hydrolysis by HslU are essential for unfolding of protein substrates subsequently hydrolyzed by HslV. HslU recognizes the N-terminal part of its protein substrates and unfolds these before they are guided to HslV for hydrolysis. The polypeptide is ATP-dependent protease ATPase subunit HslU (Bradyrhizobium sp. (strain BTAi1 / ATCC BAA-1182)).